Here is a 168-residue protein sequence, read N- to C-terminus: ADP-ribosylation factor-like protein 2-binding protein (168 aa).

It belongs to the ARL2BP family.

Its subcellular location is the cytoplasm. It is found in the mitochondrion intermembrane space. It localises to the cytoskeleton. The protein localises to the microtubule organizing center. The protein resides in the centrosome. Its subcellular location is the nucleus. It is found in the spindle. It localises to the cilium basal body. Plays a role as an effector of the ADP-ribosylation factor-like protein 2, ARL2. The protein is ADP-ribosylation factor-like protein 2-binding protein (arl2bp) of Danio rerio (Zebrafish).